Consider the following 577-residue polypeptide: MDRAVSQVALENDEREAKNTWRLIFRIAILLLTVVTLATSVASLVYSMGASTPSDLVGIPTRISRAEEKITSALGSNQDVVDRIYKQVALESPLALLNTETTIMNAITSLSYQINGAANNSGWGAPIHDPDFIGGIGKELIVDNASDVTSFYPSAFQEHLNFIPAPTTGSGCTRIPSFDMSATHYCYTHNVILSGCRDHSHSHQYLALGVLRTTATGRIFFSTLRSISLDDTQNRKSCSVSATPLGCDMLCSKVTETEEEDYNSAVPTLMAHGRLGFDGQYHEKDLDVTTLFEDWVANYPGVGGGSFIDGRVWFSVYGGLKPNSPSDTVQEGKYVIYKRYNDTCPDEQDYQIRMAKSSYKPGRFGGKRIQQAILSIKVSTSLGEDPVLTVPPNTVTLMGAEGRILTVGTSHFLYQRGSSYFSPALLYPMTVSNKTATLHSPYTFNAFTRPGSIPCQASARCPNSCVTGVYTDPYPLIFYRNHTLRGVFGTMLDSEQARLNPASAVFDSTSRSRITRVSSSSTKAAYTTSTCFKVVKTNKTYCLSIAEISNTLFGEFRIVPLLVEILKNDGVREARSG.

The Intravirion portion of the chain corresponds to 1-22; that stretch reads MDRAVSQVALENDEREAKNTWR. The chain crosses the membrane as a helical span at residues 23-45; that stretch reads LIFRIAILLLTVVTLATSVASLV. The Virion surface segment spans residues 46–571; sequence YSMGASTPSD…LVEILKNDGV (526 aa). N-linked (GlcNAc...) asparagine; by host glycans are attached at residues Asn-119 and Asn-144. The tract at residues 124 to 152 is important for interaction with fusion/F protein; that stretch reads GAPIHDPDFIGGIGKELIVDNASDVTSFY. 3 disulfides stabilise this stretch: Cys-172–Cys-196, Cys-186–Cys-247, and Cys-238–Cys-251. Positions 234–239 are involved in neuraminidase activity; sequence NRKSCS. 2 N-linked (GlcNAc...) asparagine; by host glycosylation sites follow: Asn-341 and Asn-433. Intrachain disulfides connect Cys-344-Cys-461 and Cys-455-Cys-465. 2 N-linked (GlcNAc...) asparagine; by host glycosylation sites follow: Asn-481 and Asn-538. A disulfide bridge links Cys-531 with Cys-542.

Belongs to the paramyxoviruses hemagglutinin-neuraminidase family. In terms of assembly, homotetramer; composed of disulfide-linked homodimers. Interacts with F protein trimer. Interacts with host CG-1B; this interaction inhibits viral adsorption and replication rather than internalization.

The protein resides in the virion membrane. Its subcellular location is the host cell membrane. The catalysed reaction is Hydrolysis of alpha-(2-&gt;3)-, alpha-(2-&gt;6)-, alpha-(2-&gt;8)- glycosidic linkages of terminal sialic acid residues in oligosaccharides, glycoproteins, glycolipids, colominic acid and synthetic substrates.. Functionally, mediates the viral entry into the host cell together with fusion/F protein. Attaches the virus to sialic acid-containing cell receptors and thereby initiates infection. Binding of HN protein to the receptor induces a conformational change that allows the F protein to trigger virion/cell membranes fusion. Neuraminidase activity ensures the efficient spread of the virus by dissociating the mature virions from the neuraminic acid containing glycoproteins. The polypeptide is Hemagglutinin-neuraminidase (HN) (Gallus gallus (Chicken)).